We begin with the raw amino-acid sequence, 390 residues long: Dual-specificity RNA methyltransferase RlmN (390 aa).

Glutamate 110 acts as the Proton acceptor in catalysis. The Radical SAM core domain maps to 116–355 (EADRATLCVS…VIIRKTRGDD (240 aa)). A disulfide bridge connects residues cysteine 123 and cysteine 360. Residues cysteine 130, cysteine 134, and cysteine 137 each contribute to the [4Fe-4S] cluster site. S-adenosyl-L-methionine-binding positions include 184-185 (GE), serine 216, 238-240 (SLH), and asparagine 317. The active-site S-methylcysteine intermediate is cysteine 360.

The protein belongs to the radical SAM superfamily. RlmN family. Requires [4Fe-4S] cluster as cofactor.

The protein resides in the cytoplasm. It carries out the reaction adenosine(2503) in 23S rRNA + 2 reduced [2Fe-2S]-[ferredoxin] + 2 S-adenosyl-L-methionine = 2-methyladenosine(2503) in 23S rRNA + 5'-deoxyadenosine + L-methionine + 2 oxidized [2Fe-2S]-[ferredoxin] + S-adenosyl-L-homocysteine. It catalyses the reaction adenosine(37) in tRNA + 2 reduced [2Fe-2S]-[ferredoxin] + 2 S-adenosyl-L-methionine = 2-methyladenosine(37) in tRNA + 5'-deoxyadenosine + L-methionine + 2 oxidized [2Fe-2S]-[ferredoxin] + S-adenosyl-L-homocysteine. In terms of biological role, specifically methylates position 2 of adenine 2503 in 23S rRNA and position 2 of adenine 37 in tRNAs. m2A2503 modification seems to play a crucial role in the proofreading step occurring at the peptidyl transferase center and thus would serve to optimize ribosomal fidelity. The protein is Dual-specificity RNA methyltransferase RlmN of Haemophilus influenzae (strain 86-028NP).